A 225-amino-acid chain; its full sequence is Phosphoribosylformylglycinamidine synthase subunit PurQ (225 aa).

The Glutamine amidotransferase type-1 domain maps to 5 to 225; sequence SAVITFPGSN…ESVVRGLVEA (221 aa). The active-site Nucleophile is the Cys89. Active-site residues include His197 and Glu199.

As to quaternary structure, part of the FGAM synthase complex composed of 1 PurL, 1 PurQ and 2 PurS subunits.

It is found in the cytoplasm. The catalysed reaction is N(2)-formyl-N(1)-(5-phospho-beta-D-ribosyl)glycinamide + L-glutamine + ATP + H2O = 2-formamido-N(1)-(5-O-phospho-beta-D-ribosyl)acetamidine + L-glutamate + ADP + phosphate + H(+). It carries out the reaction L-glutamine + H2O = L-glutamate + NH4(+). It participates in purine metabolism; IMP biosynthesis via de novo pathway; 5-amino-1-(5-phospho-D-ribosyl)imidazole from N(2)-formyl-N(1)-(5-phospho-D-ribosyl)glycinamide: step 1/2. In terms of biological role, part of the phosphoribosylformylglycinamidine synthase complex involved in the purines biosynthetic pathway. Catalyzes the ATP-dependent conversion of formylglycinamide ribonucleotide (FGAR) and glutamine to yield formylglycinamidine ribonucleotide (FGAM) and glutamate. The FGAM synthase complex is composed of three subunits. PurQ produces an ammonia molecule by converting glutamine to glutamate. PurL transfers the ammonia molecule to FGAR to form FGAM in an ATP-dependent manner. PurS interacts with PurQ and PurL and is thought to assist in the transfer of the ammonia molecule from PurQ to PurL. This is Phosphoribosylformylglycinamidine synthase subunit PurQ from Novosphingobium aromaticivorans (strain ATCC 700278 / DSM 12444 / CCUG 56034 / CIP 105152 / NBRC 16084 / F199).